The following is a 295-amino-acid chain: MPVESSKLLDGKGLAQKIQGELTAQIQTLQAEIGRPPGLAVLMVGDNPASAAYVRNKERACERLGIASFGHHFPAEVTFEEVKQTIHDLNANPQVDGILVQLPLPAHLDSTALLYEIDPDKDVDGLHPLNLGRLVRGEAGLRSCTPAGVMRLLAAYDVELSGLHAVVIGRSILVGKPVSLMLLAANATVTMAHSRTPDLAAVTRTADVLVAAVGKPGLITADMVKPGAVVIDVGISRQEIEGKARLVGDVEFTSVQSQSSLITPVPGGVGPITVSMLLENTVWSFRQRHKGSYNS.

NADP(+) is bound by residues 169–171 (GRS), S194, and I235.

This sequence belongs to the tetrahydrofolate dehydrogenase/cyclohydrolase family. As to quaternary structure, homodimer.

It carries out the reaction (6R)-5,10-methylene-5,6,7,8-tetrahydrofolate + NADP(+) = (6R)-5,10-methenyltetrahydrofolate + NADPH. It catalyses the reaction (6R)-5,10-methenyltetrahydrofolate + H2O = (6R)-10-formyltetrahydrofolate + H(+). The protein operates within one-carbon metabolism; tetrahydrofolate interconversion. Its function is as follows. Catalyzes the oxidation of 5,10-methylenetetrahydrofolate to 5,10-methenyltetrahydrofolate and then the hydrolysis of 5,10-methenyltetrahydrofolate to 10-formyltetrahydrofolate. This is Bifunctional protein FolD from Acaryochloris marina (strain MBIC 11017).